The following is a 148-amino-acid chain: 15 kDa excretory/secretory protein (148 aa).

A signal peptide spans 1–19 (MFFAFAVLLIALATREAYG).

It to T.colubriformis 30 kDa antigenic glycoprotein.

It localises to the secreted. In Haemonchus contortus (Barber pole worm), this protein is 15 kDa excretory/secretory protein.